Consider the following 227-residue polypeptide: Cytidylate kinase (227 aa).

Residue 10 to 18 (GPSGSGKGT) coordinates ATP.

Belongs to the cytidylate kinase family. Type 1 subfamily.

The protein resides in the cytoplasm. The catalysed reaction is CMP + ATP = CDP + ADP. It catalyses the reaction dCMP + ATP = dCDP + ADP. In Acinetobacter baylyi (strain ATCC 33305 / BD413 / ADP1), this protein is Cytidylate kinase.